Consider the following 510-residue polypeptide: 2,3-bisphosphoglycerate-independent phosphoglycerate mutase (510 aa).

Mn(2+) contacts are provided by D13 and S63. S63 acts as the Phosphoserine intermediate in catalysis. Residues H124, 154–155, R186, R192, 262–265, and K334 contribute to the substrate site; these read RD and RADR. Mn(2+) is bound by residues D401, H405, D442, H443, and H461.

It belongs to the BPG-independent phosphoglycerate mutase family. In terms of assembly, monomer. Mn(2+) serves as cofactor.

The catalysed reaction is (2R)-2-phosphoglycerate = (2R)-3-phosphoglycerate. The protein operates within carbohydrate degradation; glycolysis; pyruvate from D-glyceraldehyde 3-phosphate: step 3/5. Functionally, catalyzes the interconversion of 2-phosphoglycerate and 3-phosphoglycerate. This is 2,3-bisphosphoglycerate-independent phosphoglycerate mutase from Vibrio vulnificus (strain YJ016).